Reading from the N-terminus, the 308-residue chain is Ornithine carbamoyltransferase (308 aa).

Carbamoyl phosphate contacts are provided by residues S56–T59, Q83, R107, and H134–Q137. Residues N165, D225, and S229–M230 each bind L-ornithine. Carbamoyl phosphate is bound by residues C266–L267 and R294.

This sequence belongs to the aspartate/ornithine carbamoyltransferase superfamily. OTCase family.

It is found in the cytoplasm. The enzyme catalyses carbamoyl phosphate + L-ornithine = L-citrulline + phosphate + H(+). It functions in the pathway amino-acid degradation; L-arginine degradation via ADI pathway; carbamoyl phosphate from L-arginine: step 2/2. In terms of biological role, reversibly catalyzes the transfer of the carbamoyl group from carbamoyl phosphate (CP) to the N(epsilon) atom of ornithine (ORN) to produce L-citrulline. The sequence is that of Ornithine carbamoyltransferase from Cereibacter sphaeroides (strain KD131 / KCTC 12085) (Rhodobacter sphaeroides).